Consider the following 629-residue polypeptide: tRNA uridine 5-carboxymethylaminomethyl modification enzyme MnmG (629 aa).

FAD is bound by residues 13–18, valine 125, and serine 180; that span reads GGGHAG. An NAD(+)-binding site is contributed by 273–287; that stretch reads GPRYCPSIEDKIHRF. Position 370 (glutamine 370) interacts with FAD.

This sequence belongs to the MnmG family. Homodimer. Heterotetramer of two MnmE and two MnmG subunits. FAD is required as a cofactor.

Its subcellular location is the cytoplasm. NAD-binding protein involved in the addition of a carboxymethylaminomethyl (cmnm) group at the wobble position (U34) of certain tRNAs, forming tRNA-cmnm(5)s(2)U34. The chain is tRNA uridine 5-carboxymethylaminomethyl modification enzyme MnmG from Shewanella oneidensis (strain ATCC 700550 / JCM 31522 / CIP 106686 / LMG 19005 / NCIMB 14063 / MR-1).